Reading from the N-terminus, the 129-residue chain is Protein Turandot B2 (129 aa).

Residues 1-21 (MNSATSLMCFALLLISPLCMG) form the signal peptide.

It belongs to the Turandot family.

The protein resides in the secreted. Functionally, a humoral factor that may play a role in stress tolerance. The chain is Protein Turandot B2 (TotB2) from Drosophila erecta (Fruit fly).